A 111-amino-acid polypeptide reads, in one-letter code: Probable U2 small nuclear ribonucleoprotein B'' (111 aa).

The region spanning 4–83 is the RRM domain; that stretch reads NTLYVNNLND…KEMKIQYAHS (80 aa).

Belongs to the 40S cdc5-associated complex (or cwf complex), a spliceosome sub-complex reminiscent of a late-stage spliceosome composed of the U2, U5 and U6 snRNAs and at least brr2, cdc5, cwf2/prp3, cwf3/syf1, cwf4/syf3, cwf5/ecm2, spp42/cwf6, cwf7/spf27, cwf8, cwf9, cwf10, cwf11, cwf12, prp45/cwf13, cwf14, cwf15, cwf16, cwf17, cwf18, cwf19, cwf20, cwf21, cwf22, cwf23, cwf24, cwf25, cwf26, cyp7/cwf27, cwf28, cwf29/ist3, lea1, msl1, prp5/cwf1, prp10, prp12/sap130, prp17, prp22, sap61, sap62, sap114, sap145, slu7, smb1, smd1, smd3, smf1, smg1 and syf2.

Its subcellular location is the nucleus. Functionally, involved in pre-mRNA splicing. This protein is associated with snRNP U2. It binds stem loop IV of U2 snRNA. In Schizosaccharomyces pombe (strain 972 / ATCC 24843) (Fission yeast), this protein is Probable U2 small nuclear ribonucleoprotein B'' (msl1).